The chain runs to 471 residues: Adenosylhomocysteinase (471 aa).

Residues Thr60, Asp135, and Glu196 each coordinate substrate. NAD(+) is bound at residue 197-199 (TTT). Substrate-binding residues include Lys226 and Asp230. NAD(+)-binding positions include Asn231, 260-265 (GYGDVG), Glu283, Asn318, 339-341 (IGH), and Asn387.

Belongs to the adenosylhomocysteinase family. NAD(+) is required as a cofactor.

It localises to the cytoplasm. The catalysed reaction is S-adenosyl-L-homocysteine + H2O = L-homocysteine + adenosine. It functions in the pathway amino-acid biosynthesis; L-homocysteine biosynthesis; L-homocysteine from S-adenosyl-L-homocysteine: step 1/1. Its function is as follows. May play a key role in the regulation of the intracellular concentration of adenosylhomocysteine. In Chlorobaculum parvum (strain DSM 263 / NCIMB 8327) (Chlorobium vibrioforme subsp. thiosulfatophilum), this protein is Adenosylhomocysteinase.